Consider the following 63-residue polypeptide: Large ribosomal subunit protein uL29 (63 aa).

Belongs to the universal ribosomal protein uL29 family.

In Sulfurovum sp. (strain NBC37-1), this protein is Large ribosomal subunit protein uL29.